Reading from the N-terminus, the 498-residue chain is NAC domain-containing protein 75 (498 aa).

Residues L48 to Q215 form the NAC domain. Residues K166–C221 mediate DNA binding. Disordered regions lie at residues S225–S278, V338–H374, Q423–S443, and S457–G498. The segment covering I233 to E248 has biased composition (gly residues). The span at G256–S266 shows a compositional bias: low complexity. The segment covering H356–H374 has biased composition (basic residues). The span at G466–E475 shows a compositional bias: polar residues.

In terms of tissue distribution, expressed in the vascular cylinder of roots. Expressed in the differentiation zone of the root stele.

It localises to the nucleus. Its function is as follows. Transcription activator involved in xylem formation. Promotes the expression of the secondary wall-associated transcription factor MYB46. Functions upstream of NAC030/VND7, a master switch of xylem vessel differentiation. Acts as a upstream regulator of NAC101/VND6 and LBD30/ASL19. The chain is NAC domain-containing protein 75 from Arabidopsis thaliana (Mouse-ear cress).